The sequence spans 162 residues: NADH-quinone oxidoreductase subunit I (162 aa).

2 consecutive 4Fe-4S ferredoxin-type domains span residues 53-83 (LRRY…IEAE) and 93-122 (TRYD…ETRI). Residues C63, C66, C69, C73, C102, C105, C108, and C112 each coordinate [4Fe-4S] cluster.

This sequence belongs to the complex I 23 kDa subunit family. In terms of assembly, NDH-1 is composed of 14 different subunits. Subunits NuoA, H, J, K, L, M, N constitute the membrane sector of the complex. It depends on [4Fe-4S] cluster as a cofactor.

The protein localises to the cell inner membrane. It carries out the reaction a quinone + NADH + 5 H(+)(in) = a quinol + NAD(+) + 4 H(+)(out). Functionally, NDH-1 shuttles electrons from NADH, via FMN and iron-sulfur (Fe-S) centers, to quinones in the respiratory chain. The immediate electron acceptor for the enzyme in this species is believed to be ubiquinone. Couples the redox reaction to proton translocation (for every two electrons transferred, four hydrogen ions are translocated across the cytoplasmic membrane), and thus conserves the redox energy in a proton gradient. This chain is NADH-quinone oxidoreductase subunit I, found in Dechloromonas aromatica (strain RCB).